Here is a 61-residue protein sequence, read N- to C-terminus: Large ribosomal subunit protein uL30 (61 aa).

It belongs to the universal ribosomal protein uL30 family. In terms of assembly, part of the 50S ribosomal subunit.

This Petrotoga mobilis (strain DSM 10674 / SJ95) protein is Large ribosomal subunit protein uL30.